The chain runs to 224 residues: uncharacterized protein (224 aa).

Zn(2+) is bound by residues His57, His59, Asp61, His62, His138, Asp162, and His203.

This sequence belongs to the metallo-beta-lactamase superfamily. Glyoxalase II family. Zn(2+) serves as cofactor.

This is an uncharacterized protein from Mycobacterium tuberculosis (strain CDC 1551 / Oshkosh).